The chain runs to 68 residues: Wasabi receptor toxin (68 aa).

The N-terminal stretch at 1-21 (MKYFTLALTLLFLLLINPCKD) is a signal peptide. Positions 22–35 (MNFAWAESSEKVER) are excised as a propeptide. Intrachain disulfides connect Cys-44-Cys-62 and Cys-48-Cys-58.

The protein belongs to the short scorpion toxin superfamily. Potassium channel inhibitor kappa-KTx family. Kappa-KTx 1 subfamily. As to quaternary structure, monomer. In terms of tissue distribution, expressed by the venom gland.

Its subcellular location is the secreted. It localises to the host cytoplasm. Cell-penetrating peptide (CPP) with defensive purpose that induces pain by specifically activating mammalian sensory neuron TRPA1 channels. It non-covalently binds to the same region than other TRPA1 agonists (irritants), but acts via a distinct biochemical mechanism. Its binding stabilizes the TRPA1 open state and diminishes calcium-permeability. Consequently, it produces pain and pain hypersensitivity, but fails to trigger efferent release of neuropeptides (CGRP) and neurogenic inflammation typically produced by noxious electrophiles. Is not active on voltage-gated potassium channels and other TRP channels. This is Wasabi receptor toxin from Urodacus manicatus (Black rock scorpion).